Here is a 383-residue protein sequence, read N- to C-terminus: Arginine biosynthesis bifunctional protein ArgJ (383 aa).

Substrate contacts are provided by Thr146, Lys168, Thr179, Glu259, Asn378, and Ser383. The active-site Nucleophile is Thr179.

This sequence belongs to the ArgJ family. As to quaternary structure, heterotetramer of two alpha and two beta chains.

The protein localises to the cytoplasm. It carries out the reaction N(2)-acetyl-L-ornithine + L-glutamate = N-acetyl-L-glutamate + L-ornithine. It catalyses the reaction L-glutamate + acetyl-CoA = N-acetyl-L-glutamate + CoA + H(+). It functions in the pathway amino-acid biosynthesis; L-arginine biosynthesis; L-ornithine and N-acetyl-L-glutamate from L-glutamate and N(2)-acetyl-L-ornithine (cyclic): step 1/1. The protein operates within amino-acid biosynthesis; L-arginine biosynthesis; N(2)-acetyl-L-ornithine from L-glutamate: step 1/4. Functionally, catalyzes two activities which are involved in the cyclic version of arginine biosynthesis: the synthesis of N-acetylglutamate from glutamate and acetyl-CoA as the acetyl donor, and of ornithine by transacetylation between N(2)-acetylornithine and glutamate. This chain is Arginine biosynthesis bifunctional protein ArgJ, found in Streptomyces avermitilis (strain ATCC 31267 / DSM 46492 / JCM 5070 / NBRC 14893 / NCIMB 12804 / NRRL 8165 / MA-4680).